Here is a 570-residue protein sequence, read N- to C-terminus: Phosphoglucomutase 1 (570 aa).

Residue Ser2 is modified to N-acetylserine. Alpha-D-glucose 1,6-bisphosphate is bound by residues Arg24 and Ser120. Ser120 acts as the Phosphoserine intermediate in catalysis. 4 residues coordinate Mg(2+): Ser120, Asp291, Asp293, and Asp295. Phosphoserine is present on Ser120. Positions 295, 296, 360, 379, 381, and 392 each coordinate alpha-D-glucose 1,6-bisphosphate.

It belongs to the phosphohexose mutase family. As to quaternary structure, monomer. The cofactor is Mg(2+).

The protein resides in the cytoplasm. The enzyme catalyses alpha-D-glucose 1-phosphate = alpha-D-glucose 6-phosphate. It catalyses the reaction O-phospho-L-seryl-[protein] + alpha-D-glucose 1-phosphate = alpha-D-glucose 1,6-bisphosphate + L-seryl-[protein]. It carries out the reaction alpha-D-glucose 1,6-bisphosphate + L-seryl-[protein] = O-phospho-L-seryl-[protein] + alpha-D-glucose 6-phosphate. Its function is as follows. Minor phosphoglucomutase isozyme that catalyzes the reversible interconversion of alpha-D-glucose 1-phosphate and alpha-D-glucose 6-phosphate. The mechanism proceeds via the intermediate compound alpha-D-glucose 1,6-bisphosphate. Constitutes about 10-20% of the phosphoglucomutase activity in the cell. Key enzyme in hexose metabolism. The forward reaction is an essential step in the energy metabolism of galactose since the product of the galactose pathway enzymes in yeast is glucose 1-phosphate. The reverse reaction is an essential step for biosynthesis when carbon sources other than galactose are the energy source because glucose 1-phosphate is the starting point for the synthesis of UDP-glucose, which acts as a precursor for the synthesis of oligosaccharides and trehalose. This Saccharomyces cerevisiae (strain ATCC 204508 / S288c) (Baker's yeast) protein is Phosphoglucomutase 1.